The following is a 115-amino-acid chain: Non-specific lipid-transfer protein Cor a 8.0101 (115 aa).

The N-terminal stretch at 1-23 (MGSLKLVCAVLLCMMVAAPVARA) is a signal peptide. 4 disulfide bridges follow: Cys-27–Cys-74, Cys-37–Cys-51, Cys-52–Cys-97, and Cys-72–Cys-111.

This sequence belongs to the plant LTP family. In terms of assembly, monomer. In terms of tissue distribution, expressed in seed (at protein level). Expressed in seed.

Its function is as follows. Plant non-specific lipid-transfer proteins transfer phospholipids as well as galactolipids across membranes. May play a role in wax or cutin deposition in the cell walls of expanding epidermal cells and certain secretory tissues. The sequence is that of Non-specific lipid-transfer protein Cor a 8.0101 from Corylus avellana (European hazel).